Consider the following 751-residue polypeptide: Protein WEAK CHLOROPLAST MOVEMENT UNDER BLUE LIGHT-like 3 (751 aa).

At S113 the chain carries Phosphoserine. Coiled coils occupy residues 165-558 (ERRK…ALQE) and 588-647 (QALE…KARD). Composition is skewed to basic and acidic residues over residues 455–467 (RERQDLEETKQKE) and 625–689 (NREM…RNKE). Disordered regions lie at residues 455 to 479 (RERQDLEETKQKESTGLARTNDKDA) and 625 to 751 (NREM…HSHK). Low complexity predominate over residues 704-723 (GSSSNNTGGSTTTNNNNLTP).

The protein belongs to the WEB family.

This is Protein WEAK CHLOROPLAST MOVEMENT UNDER BLUE LIGHT-like 3 (WEL3) from Arabidopsis thaliana (Mouse-ear cress).